Here is a 303-residue protein sequence, read N- to C-terminus: Sulfotransferase 6B1 (303 aa).

Residue 65–70 (KCGSNW) participates in 3'-phosphoadenylyl sulfate binding. Histidine 118 (proton acceptor) is an active-site residue. 3'-phosphoadenylyl sulfate contacts are provided by residues arginine 140, serine 148, tyrosine 203, 237–242 (STFQAM), and 259–261 (RKG).

Belongs to the sulfotransferase 1 family.

The protein localises to the cytoplasm. The protein resides in the cytosol. The catalysed reaction is thyroxine + 3'-phosphoadenylyl sulfate = thyroxine sulfate + adenosine 3',5'-bisphosphate + H(+). Its function is as follows. Sulfotransferase that utilizes 3'-phospho-5'-adenylyl sulfate (PAPS) as sulfonate donor to catalyze the sulfate conjugation of thyroxine. Involved in the metabolism of thyroxine. The sequence is that of Sulfotransferase 6B1 (SULT6B1) from Gorilla gorilla gorilla (Western lowland gorilla).